Consider the following 252-residue polypeptide: NAD(P)H-quinone oxidoreductase subunit K (252 aa).

[4Fe-4S] cluster is bound by residues cysteine 73, cysteine 74, cysteine 138, and cysteine 169. Positions 225 to 236 are enriched in polar residues; the sequence is ASTQKQALSPSQ. The tract at residues 225-252 is disordered; the sequence is ASTQKQALSPSQEIPLEDQNEATKEIAQ.

This sequence belongs to the complex I 20 kDa subunit family. As to quaternary structure, NDH-1 can be composed of about 15 different subunits; different subcomplexes with different compositions have been identified which probably have different functions. [4Fe-4S] cluster serves as cofactor.

It localises to the cellular thylakoid membrane. The enzyme catalyses a plastoquinone + NADH + (n+1) H(+)(in) = a plastoquinol + NAD(+) + n H(+)(out). The catalysed reaction is a plastoquinone + NADPH + (n+1) H(+)(in) = a plastoquinol + NADP(+) + n H(+)(out). Its function is as follows. NDH-1 shuttles electrons from an unknown electron donor, via FMN and iron-sulfur (Fe-S) centers, to quinones in the respiratory and/or the photosynthetic chain. The immediate electron acceptor for the enzyme in this species is believed to be plastoquinone. Couples the redox reaction to proton translocation, and thus conserves the redox energy in a proton gradient. Cyanobacterial NDH-1 also plays a role in inorganic carbon-concentration. In Prochlorococcus marinus (strain MIT 9211), this protein is NAD(P)H-quinone oxidoreductase subunit K.